The sequence spans 180 residues: Nucleoplasmin-3 (180 aa).

A2 bears the N-acetylalanine mark. S13 and S16 each carry phosphoserine. Position 27 is an omega-N-methylarginine (R27). Residues 141 to 180 (TMSNDVSEEESEEEEEEEDSDEEEAELCPILPAKKQGGRP) form a disordered region. A compositionally biased stretch (acidic residues) spans 146-166 (VSEEESEEEEEEEDSDEEEAE). Residues S147, S151, and S160 each carry the phosphoserine modification.

This sequence belongs to the nucleoplasmin family. Interacts with NPM (via N-terminus). Forms a pentamer with NPM at a ratio 4:1 (NPM3/NPM). Two pentamers form a decamer. In terms of processing, phosphorylated.

The protein resides in the nucleus. It localises to the nucleolus. Plays a role in the regulation of diverse cellular processes such as ribosome biogenesis, chromatin remodeling or protein chaperoning. Modulates the histone chaperone function and the RNA-binding activity of nucleolar phosphoprotein B23/NPM. Efficiently mediates chromatin remodeling when included in a pentamer containing NPM3 and NPM. In Pongo abelii (Sumatran orangutan), this protein is Nucleoplasmin-3 (NPM3).